Consider the following 212-residue polypeptide: Pyrrolidone-carboxylate peptidase (212 aa).

Catalysis depends on residues E80, C143, and H165.

The protein belongs to the peptidase C15 family. Homotetramer.

It is found in the cytoplasm. The enzyme catalyses Release of an N-terminal pyroglutamyl group from a polypeptide, the second amino acid generally not being Pro.. In terms of biological role, removes 5-oxoproline from various penultimate amino acid residues except L-proline. This is Pyrrolidone-carboxylate peptidase from Vibrio vulnificus (strain CMCP6).